The chain runs to 164 residues: Phosphohistidine phosphatase SixA homolog (164 aa).

It belongs to the SixA phosphatase family.

This is Phosphohistidine phosphatase SixA homolog (sixA-A) from Haemophilus influenzae (strain ATCC 51907 / DSM 11121 / KW20 / Rd).